A 307-amino-acid polypeptide reads, in one-letter code: Olfactory receptor 5M3 (307 aa).

The Extracellular segment spans residues 1 to 23 (MLNFTDVTEFILLGLTSRREWQV). The N-linked (GlcNAc...) asparagine glycan is linked to Asn-3. The helical transmembrane segment at 24–44 (LFFIIFLVVYIITMVGNIGMM) threads the bilayer. Topologically, residues 45 to 52 (VLIKVSPQ) are cytoplasmic. A helical membrane pass occupies residues 53 to 73 (LNNPMYFFLSHLSFVDVWFSS). Residues 74-97 (NVTPKMLENLLSDKKTITYAGCLV) lie on the Extracellular side of the membrane. Cys-95 and Cys-187 are disulfide-bonded. A helical membrane pass occupies residues 98–118 (QCFFFIALVHVEIFILAAMAF). Residues 119-137 (DRYMAIGNPLLYGSKMSRV) lie on the Cytoplasmic side of the membrane. A helical transmembrane segment spans residues 138–158 (VCIRLITFPYIYGFLTSLAAT). At 159–194 (LWTYGLYFCGKIEINHFYCADPPLIKMACAGTFVKE) the chain is on the extracellular side. Residues 195 to 215 (YTMIILAGINFTYSLTVIIIS) traverse the membrane as a helical segment. Residues 216–235 (YLFILIAILRMRSAEGRQKA) lie on the Cytoplasmic side of the membrane. The helical transmembrane segment at 236–256 (FSTCGSHLTAVIIFYGTLIFM) threads the bilayer. The Extracellular segment spans residues 257–269 (YLRRPTEESVEQG). A helical transmembrane segment spans residues 270–290 (KMVAVFYTTVIPMLNPMIYSL). Topologically, residues 291–307 (RNKDVKKAMMKVISRSC) are cytoplasmic.

It belongs to the G-protein coupled receptor 1 family.

The protein resides in the cell membrane. Odorant receptor. The chain is Olfactory receptor 5M3 (OR5M3) from Homo sapiens (Human).